A 252-amino-acid polypeptide reads, in one-letter code: Imidazole glycerol phosphate synthase subunit HisF (252 aa).

Active-site residues include Asp-11 and Asp-130.

The protein belongs to the HisA/HisF family. As to quaternary structure, heterodimer of HisH and HisF.

It is found in the cytoplasm. The enzyme catalyses 5-[(5-phospho-1-deoxy-D-ribulos-1-ylimino)methylamino]-1-(5-phospho-beta-D-ribosyl)imidazole-4-carboxamide + L-glutamine = D-erythro-1-(imidazol-4-yl)glycerol 3-phosphate + 5-amino-1-(5-phospho-beta-D-ribosyl)imidazole-4-carboxamide + L-glutamate + H(+). The protein operates within amino-acid biosynthesis; L-histidine biosynthesis; L-histidine from 5-phospho-alpha-D-ribose 1-diphosphate: step 5/9. Its function is as follows. IGPS catalyzes the conversion of PRFAR and glutamine to IGP, AICAR and glutamate. The HisF subunit catalyzes the cyclization activity that produces IGP and AICAR from PRFAR using the ammonia provided by the HisH subunit. In Polynucleobacter necessarius subsp. necessarius (strain STIR1), this protein is Imidazole glycerol phosphate synthase subunit HisF.